The primary structure comprises 145 residues: D-aminoacyl-tRNA deacylase (145 aa).

Residues 137 to 138 carry the Gly-cisPro motif, important for rejection of L-amino acids motif; that stretch reads GP.

Belongs to the DTD family. Homodimer.

It is found in the cytoplasm. The enzyme catalyses glycyl-tRNA(Ala) + H2O = tRNA(Ala) + glycine + H(+). The catalysed reaction is a D-aminoacyl-tRNA + H2O = a tRNA + a D-alpha-amino acid + H(+). Its function is as follows. An aminoacyl-tRNA editing enzyme that deacylates mischarged D-aminoacyl-tRNAs. Also deacylates mischarged glycyl-tRNA(Ala), protecting cells against glycine mischarging by AlaRS. Acts via tRNA-based rather than protein-based catalysis; rejects L-amino acids rather than detecting D-amino acids in the active site. By recycling D-aminoacyl-tRNA to D-amino acids and free tRNA molecules, this enzyme counteracts the toxicity associated with the formation of D-aminoacyl-tRNA entities in vivo and helps enforce protein L-homochirality. The chain is D-aminoacyl-tRNA deacylase from Streptomyces avermitilis (strain ATCC 31267 / DSM 46492 / JCM 5070 / NBRC 14893 / NCIMB 12804 / NRRL 8165 / MA-4680).